The following is a 464-amino-acid chain: Cysteine--tRNA ligase (464 aa).

Cys27 provides a ligand contact to Zn(2+). The short motif at 29-39 (PTVYNYFHIGN) is the 'HIGH' region element. Cys207, His232, and Glu236 together coordinate Zn(2+). The short motif at 264–268 (KMSKS) is the 'KMSKS' region element. ATP is bound at residue Lys267.

This sequence belongs to the class-I aminoacyl-tRNA synthetase family. Monomer. The cofactor is Zn(2+).

It is found in the cytoplasm. The catalysed reaction is tRNA(Cys) + L-cysteine + ATP = L-cysteinyl-tRNA(Cys) + AMP + diphosphate. This Alkaliphilus oremlandii (strain OhILAs) (Clostridium oremlandii (strain OhILAs)) protein is Cysteine--tRNA ligase.